A 201-amino-acid chain; its full sequence is 3-isopropylmalate dehydratase small subunit (201 aa).

The protein belongs to the LeuD family. LeuD type 1 subfamily. As to quaternary structure, heterodimer of LeuC and LeuD.

The enzyme catalyses (2R,3S)-3-isopropylmalate = (2S)-2-isopropylmalate. Its pathway is amino-acid biosynthesis; L-leucine biosynthesis; L-leucine from 3-methyl-2-oxobutanoate: step 2/4. Catalyzes the isomerization between 2-isopropylmalate and 3-isopropylmalate, via the formation of 2-isopropylmaleate. In Shewanella oneidensis (strain ATCC 700550 / JCM 31522 / CIP 106686 / LMG 19005 / NCIMB 14063 / MR-1), this protein is 3-isopropylmalate dehydratase small subunit.